An 81-amino-acid polypeptide reads, in one-letter code: Protein Vpu (81 aa).

The Extracellular segment spans residues 1–7 (MSNLLAI). A helical membrane pass occupies residues 8–28 (GIAALIVALIITIVVWTIAYI). Over 29–81 (EYKKLVRQRKINRLYKRISERAEDSGNESEGDAEELAALGEVGPFIPGDINNL) the chain is Cytoplasmic. A phosphoserine; by host CK2 mark is found at Ser-53 and Ser-57.

The protein belongs to the HIV-1 VPU protein family. In terms of assembly, homopentamer. Interacts with host CD4 and BRTC; these interactions induce proteasomal degradation of CD4. Interacts with host BST2; this interaction leads to the degradation of host BST2. Interacts with host FBXW11. Interacts with host AP1M1; this interaction plays a role in the mistrafficking and subsequent degradation of host BST2. Interacts with host RANBP2; this interaction allows Vpu to down-regulate host BLM sumoylation. In terms of processing, phosphorylated by host CK2. This phosphorylation is necessary for interaction with human BTRC and degradation of CD4.

It localises to the host membrane. Ion channel activity is inhibited by hexamethylene amiloride in vitro. Enhances virion budding by targeting host CD4 and Tetherin/BST2 to proteasome degradation. Degradation of CD4 prevents any unwanted premature interactions between viral Env and its host receptor CD4 in the endoplasmic reticulum. Degradation of antiretroviral protein Tetherin/BST2 is important for virion budding, as BST2 tethers new viral particles to the host cell membrane. Mechanistically, Vpu bridges either CD4 or BST2 to BTRC, a substrate recognition subunit of the Skp1/Cullin/F-box protein E3 ubiquitin ligase, induces their ubiquitination and subsequent proteasomal degradation. The alteration of the E3 ligase specificity by Vpu seems to promote the degradation of host IKBKB, leading to NF-kappa-B down-regulation and subsequent apoptosis. Acts as a viroporin that forms an oligomeric ion channel in membranes. Modulates the host DNA repair mechanisms to promote degradation of nuclear viral cDNA in cells that are already productively infected in order to suppress immune sensing and proviral hyper-integration (superinfection). Manipulates PML-NBs and modulates SUMOylation of host BLM protein thereby enhancing its DNA-end processing activity toward viral unintegrated linear DNA. Also inhibits RAD52-mediated homologous repair of viral cDNA, preventing the generation of dead-end circular forms of single copies of the long terminal repeat and permitting sustained nucleolytic attack. In Homo sapiens (Human), this protein is Protein Vpu.